The primary structure comprises 214 residues: Probable transaldolase (214 aa).

The Schiff-base intermediate with substrate role is filled by lysine 83.

Belongs to the transaldolase family. Type 3B subfamily.

Its subcellular location is the cytoplasm. The catalysed reaction is D-sedoheptulose 7-phosphate + D-glyceraldehyde 3-phosphate = D-erythrose 4-phosphate + beta-D-fructose 6-phosphate. It participates in carbohydrate degradation; pentose phosphate pathway; D-glyceraldehyde 3-phosphate and beta-D-fructose 6-phosphate from D-ribose 5-phosphate and D-xylulose 5-phosphate (non-oxidative stage): step 2/3. Functionally, transaldolase is important for the balance of metabolites in the pentose-phosphate pathway. This chain is Probable transaldolase, found in Streptococcus equi subsp. equi (strain 4047).